A 507-amino-acid polypeptide reads, in one-letter code: Sterol 14-alpha demethylase CYP51A (507 aa).

A helical transmembrane segment spans residues 7-29 (YPLWVLVALFAVIIANLLYQQLP). Tyr-105 serves as a coordination point for lanosterol. Cys-449 provides a ligand contact to heme.

It belongs to the cytochrome P450 family. Requires heme as cofactor.

The protein resides in the endoplasmic reticulum membrane. It catalyses the reaction a 14alpha-methyl steroid + 3 reduced [NADPH--hemoprotein reductase] + 3 O2 = a Delta(14) steroid + formate + 3 oxidized [NADPH--hemoprotein reductase] + 4 H2O + 4 H(+). It carries out the reaction a 14alpha-methyl steroid + reduced [NADPH--hemoprotein reductase] + O2 = a 14alpha-hydroxymethyl steroid + oxidized [NADPH--hemoprotein reductase] + H2O + H(+). The enzyme catalyses a 14alpha-hydroxymethyl steroid + reduced [NADPH--hemoprotein reductase] + O2 = a 14alpha-formyl steroid + oxidized [NADPH--hemoprotein reductase] + 2 H2O + H(+). The catalysed reaction is a 14alpha-formyl steroid + reduced [NADPH--hemoprotein reductase] + O2 = a Delta(14) steroid + formate + oxidized [NADPH--hemoprotein reductase] + H2O + 2 H(+). It catalyses the reaction lanosterol + 3 reduced [NADPH--hemoprotein reductase] + 3 O2 = 4,4-dimethyl-5alpha-cholesta-8,14,24-trien-3beta-ol + formate + 3 oxidized [NADPH--hemoprotein reductase] + 4 H2O + 4 H(+). It carries out the reaction lanosterol + reduced [NADPH--hemoprotein reductase] + O2 = 32-hydroxylanosterol + oxidized [NADPH--hemoprotein reductase] + H2O + H(+). The enzyme catalyses 32-hydroxylanosterol + reduced [NADPH--hemoprotein reductase] + O2 = 32-oxolanosterol + oxidized [NADPH--hemoprotein reductase] + 2 H2O + H(+). The catalysed reaction is 32-oxolanosterol + reduced [NADPH--hemoprotein reductase] + O2 = 4,4-dimethyl-5alpha-cholesta-8,14,24-trien-3beta-ol + formate + oxidized [NADPH--hemoprotein reductase] + H2O + 2 H(+). It catalyses the reaction eburicol + 3 reduced [NADPH--hemoprotein reductase] + 3 O2 = 14-demethyleburicol + formate + 3 oxidized [NADPH--hemoprotein reductase] + 4 H2O + 4 H(+). It carries out the reaction eburicol + reduced [NADPH--hemoprotein reductase] + O2 = 32-hydroxyeburicol + oxidized [NADPH--hemoprotein reductase] + H2O + H(+). The enzyme catalyses 32-hydroxyeburicol + reduced [NADPH--hemoprotein reductase] + O2 = 32-oxoeburicol + oxidized [NADPH--hemoprotein reductase] + 2 H2O + H(+). The catalysed reaction is 32-oxoeburicol + reduced [NADPH--hemoprotein reductase] + O2 = 14-demethyleburicol + formate + oxidized [NADPH--hemoprotein reductase] + H2O + 2 H(+). Its pathway is steroid metabolism; ergosterol biosynthesis. Functionally, together with cyp51B and cyp51C, encodes the sterol 14alpha-demethylase that plays a critical role in the third module of ergosterol biosynthesis pathway, being ergosterol the major sterol component in fungal membranes that participates in a variety of functions. CYP51A encodes the sterol 14-alpha-demethylase induced on ergosterol depletion and is responsible for the intrinsic variation in azole sensitivity. The third module or late pathway involves the ergosterol synthesis itself through consecutive reactions that mainly occur in the endoplasmic reticulum (ER) membrane. In filamentous fungi, during the initial step of this module, lanosterol (lanosta-8,24-dien-3beta-ol) can be metabolized to eburicol. Sterol 14alpha-demethylase catalyzes the three-step oxidative removal of the 14alpha-methyl group (C-32) of both these sterols in the form of formate, and converts eburicol and lanosterol to 14-demethyleburicol (4,4,24-trimethylergosta-8,14,24(28)-trienol) and 4,4-dimethyl-5alpha-cholesta-8,14,24-trien-3beta-ol, respectively, which are further metabolized by other enzymes in the pathway to ergosterol. Can also use substrates not intrinsic to fungi, such as 24,25-dihydrolanosterol (DHL), producing 4,4'-dimethyl-8,14-cholestadien-3-beta-ol, but at lower rates than the endogenous substrates. The protein is Sterol 14-alpha demethylase CYP51A of Gibberella zeae (strain ATCC MYA-4620 / CBS 123657 / FGSC 9075 / NRRL 31084 / PH-1) (Wheat head blight fungus).